The sequence spans 144 residues: UPF0306 protein ESA_03544 (144 aa).

Belongs to the UPF0306 family.

In Cronobacter sakazakii (strain ATCC BAA-894) (Enterobacter sakazakii), this protein is UPF0306 protein ESA_03544.